We begin with the raw amino-acid sequence, 142 residues long: Baculoviral IAP repeat-containing protein 5 (142 aa).

Residues 18–88 form a BIR repeat; it reads RVSTFKNWPF…KHSSGCAFLS (71 aa). Serine 20 is modified (phosphoserine; by AURKC). The residue at position 23 (lysine 23) is an N6-acetyllysine. A Phosphothreonine; by CDK1 and CDK15 modification is found at threonine 34. The residue at position 48 (threonine 48) is a Phosphothreonine. Residues cysteine 57, cysteine 60, histidine 77, and cysteine 84 each coordinate Zn(2+). Residues lysine 90, lysine 110, lysine 112, and lysine 115 each carry the N6-acetyllysine modification. At threonine 117 the chain carries Phosphothreonine; by AURKB. Lysine 129 bears the N6-acetyllysine mark.

It belongs to the IAP family. In terms of assembly, monomer or homodimer. Exists as a homodimer in the apo state and as a monomer in the CPC-bound state. The monomer protects cells against apoptosis more efficiently than the dimer. Only the dimeric form is capable of enhancing tubulin stability in cells. When phosphorylated, interacts with LAMTOR5/HBXIP; the resulting complex binds pro-CASP9, as well as active CASP9, but much less efficiently. Component of the chromosomal passenger complex (CPC) composed of at least BIRC5/survivin, CDCA8/borealin, INCENP, AURKB or AURKC; in the complex forms a triple-helix bundle-based subcomplex with INCENP and CDCA8. Interacts with JTB. Interacts (via BIR domain) with histone H3 phosphorylated at 'Thr-3' (H3pT3). Interacts with EVI5. Interacts with GTP-bound RAN in both the S and M phases of the cell cycle. Interacts with USP9X. Interacts with tubulin. Interacts with BIRC2/c-IAP1. The acetylated form at Lys-129 interacts with STAT3. The monomeric form deacetylated at Lys-129 interacts with XPO1/CRM1. The monomeric form interacts with XIAP/BIRC4. Both the dimeric and monomeric form can interact with DIABLO/SMAC. Interacts with BIRC6/bruce. Interacts with FBXL7; this interaction facilitates the polyubiquitination and subsequent proteasomal degradation of BIRC5 by the SCF(FBXL7) E3 ubiquitin-protein ligase complex. Ubiquitinated by the Cul9-RING ubiquitin-protein ligase complex, leading to its degradation. Ubiquitination is required for centrosomal targeting. Deubiquitinated by USP35 or USP38; leading to stabilization. Post-translationally, acetylation at Lys-129 results in its homodimerization, while deacetylation promotes the formation of monomers which heterodimerize with XPO1/CRM1 which facilitates its nuclear export. The acetylated form represses STAT3 transactivation. The dynamic equilibrium between its acetylation and deacetylation at Lys-129 determines its interaction with XPO1/CRM1, its subsequent subcellular localization, and its ability to inhibit STAT3 transactivation. In terms of processing, in vitro phosphorylation at Thr-117 by AURKB prevents interaction with INCENP and localization to mitotic chromosomes. Phosphorylation at Thr-48 by CK2 is critical for its mitotic and anti-apoptotic activities. Phosphorylation at Thr-34 by CDK15 is critical for its anti-apoptotic activity. Phosphorylation at Ser-20 by AURKC is critical for regulation of proper chromosome alignment and segregation, and possibly cytokinesis.

It is found in the cytoplasm. It localises to the nucleus. The protein resides in the chromosome. The protein localises to the centromere. Its subcellular location is the cytoskeleton. It is found in the spindle. It localises to the kinetochore. The protein resides in the midbody. Functionally, multitasking protein that has dual roles in promoting cell proliferation and preventing apoptosis. Component of a chromosome passage protein complex (CPC) which is essential for chromosome alignment and segregation during mitosis and cytokinesis. Acts as an important regulator of the localization of this complex; directs CPC movement to different locations from the inner centromere during prometaphase to midbody during cytokinesis and participates in the organization of the center spindle by associating with polymerized microtubules. Involved in the recruitment of CPC to centromeres during early mitosis via association with histone H3 phosphorylated at 'Thr-3' (H3pT3) during mitosis. The complex with RAN plays a role in mitotic spindle formation by serving as a physical scaffold to help deliver the RAN effector molecule TPX2 to microtubules. May counteract a default induction of apoptosis in G2/M phase. The acetylated form represses STAT3 transactivation of target gene promoters. May play a role in neoplasia. Inhibitor of CASP3 and CASP7. Essential for the maintenance of mitochondrial integrity and function. The sequence is that of Baculoviral IAP repeat-containing protein 5 (BIRC5) from Bos taurus (Bovine).